Here is a 640-residue protein sequence, read N- to C-terminus: Threonine--tRNA ligase (640 aa).

A TGS domain is found at 1–61 (MPAITLPDGS…EHDAYVEIVT (61 aa)). Residues 242–533 (DHRRLGRTQD…LIEHYGGALP (292 aa)) are catalytic. Zn(2+) is bound by residues C333, H384, and H510.

Belongs to the class-II aminoacyl-tRNA synthetase family. Homodimer. Zn(2+) is required as a cofactor.

It is found in the cytoplasm. The enzyme catalyses tRNA(Thr) + L-threonine + ATP = L-threonyl-tRNA(Thr) + AMP + diphosphate + H(+). Its function is as follows. Catalyzes the attachment of threonine to tRNA(Thr) in a two-step reaction: L-threonine is first activated by ATP to form Thr-AMP and then transferred to the acceptor end of tRNA(Thr). Also edits incorrectly charged L-seryl-tRNA(Thr). In Halorhodospira halophila (strain DSM 244 / SL1) (Ectothiorhodospira halophila (strain DSM 244 / SL1)), this protein is Threonine--tRNA ligase.